Consider the following 226-residue polypeptide: ATP synthase F(0) complex subunit a (226 aa).

The next 6 helical transmembrane spans lie at Phe6 to Phe26, Trp68 to Leu88, Gln97 to Phe117, Ile138 to Val158, Ile164 to Ile184, and Thr200 to Leu222.

The protein belongs to the ATPase A chain family. Component of the ATP synthase complex composed at least of ATP5F1A/subunit alpha, ATP5F1B/subunit beta, ATP5MC1/subunit c (homooctomer), MT-ATP6/subunit a, MT-ATP8/subunit 8, ATP5ME/subunit e, ATP5MF/subunit f, ATP5MG/subunit g, ATP5MK/subunit k, ATP5MJ/subunit j, ATP5F1C/subunit gamma, ATP5F1D/subunit delta, ATP5F1E/subunit epsilon, ATP5PF/subunit F6, ATP5PB/subunit b, ATP5PD/subunit d, ATP5PO/subunit OSCP. ATP synthase complex consists of a soluble F(1) head domain (subunits alpha(3) and beta(3)) - the catalytic core - and a membrane F(0) domain - the membrane proton channel (subunits c, a, 8, e, f, g, k and j). These two domains are linked by a central stalk (subunits gamma, delta, and epsilon) rotating inside the F1 region and a stationary peripheral stalk (subunits F6, b, d, and OSCP). Interacts with DNAJC30; interaction is direct.

Its subcellular location is the mitochondrion inner membrane. The catalysed reaction is H(+)(in) = H(+)(out). Functionally, subunit a, of the mitochondrial membrane ATP synthase complex (F(1)F(0) ATP synthase or Complex V) that produces ATP from ADP in the presence of a proton gradient across the membrane which is generated by electron transport complexes of the respiratory chain. ATP synthase complex consist of a soluble F(1) head domain - the catalytic core - and a membrane F(1) domain - the membrane proton channel. These two domains are linked by a central stalk rotating inside the F(1) region and a stationary peripheral stalk. During catalysis, ATP synthesis in the catalytic domain of F(1) is coupled via a rotary mechanism of the central stalk subunits to proton translocation. With the subunit c (ATP5MC1), forms the proton-conducting channel in the F(0) domain, that contains two crucial half-channels (inlet and outlet) that facilitate proton movement from the mitochondrial intermembrane space (IMS) into the matrix. Protons are taken up via the inlet half-channel and released through the outlet half-channel, following a Grotthuss mechanism. The chain is ATP synthase F(0) complex subunit a from Bos mutus grunniens (Wild yak).